A 375-amino-acid polypeptide reads, in one-letter code: tRNA/tmRNA (uracil-C(5))-methyltransferase (375 aa).

5 residues coordinate S-adenosyl-L-methionine: Gln197, Tyr225, Asn230, Glu246, and Asp306. Cys331 (nucleophile) is an active-site residue. Glu365 serves as the catalytic Proton acceptor.

This sequence belongs to the class I-like SAM-binding methyltransferase superfamily. RNA M5U methyltransferase family. TrmA subfamily.

It carries out the reaction uridine(54) in tRNA + S-adenosyl-L-methionine = 5-methyluridine(54) in tRNA + S-adenosyl-L-homocysteine + H(+). The catalysed reaction is uridine(341) in tmRNA + S-adenosyl-L-methionine = 5-methyluridine(341) in tmRNA + S-adenosyl-L-homocysteine + H(+). Its function is as follows. Dual-specificity methyltransferase that catalyzes the formation of 5-methyluridine at position 54 (m5U54) in all tRNAs, and that of position 341 (m5U341) in tmRNA (transfer-mRNA). This chain is tRNA/tmRNA (uracil-C(5))-methyltransferase, found in Aliarcobacter butzleri (strain RM4018) (Arcobacter butzleri).